The chain runs to 339 residues: MFSQTLSKIINRKDLSREEMDRIFSDIFSGNLTDAQIGAFMAALATKGETFEELAGAAEAMRRKATRIQAASPVVVDTCGTGGDGAHTFNISTTSAFVVAGAGICVAKHGNRSVSSKCGSADVLEALGVKLDTQPEVAEEAVNEIGIGFLFAPLFHGAMKYAIVPRKELGVRTIFNMLGPLTNPAAANCQVLGVFAPQLTEMFADALNLLGARRAFVVHGHDGLDEISVCASTRVSELNDGRVQTYDISPEHFFEDRARPEDMAGGTPSENAQITRHILSGKEKGPRRNVVVVNAGAALVAAGKAEDLKAGVALAGQIIDSGKAHEKLEQLIEFTKSNG.

Residues Gly80, 83–84 (GD), Thr88, 90–93 (NIST), 108–116 (KHGNRSVSS), and Ser120 contribute to the 5-phospho-alpha-D-ribose 1-diphosphate site. Gly80 provides a ligand contact to anthranilate. Ser92 is a Mg(2+) binding site. Asn111 is an anthranilate binding site. Position 166 (Arg166) interacts with anthranilate. Mg(2+) is bound by residues Asp225 and Glu226.

This sequence belongs to the anthranilate phosphoribosyltransferase family. As to quaternary structure, homodimer. Mg(2+) serves as cofactor.

The enzyme catalyses N-(5-phospho-beta-D-ribosyl)anthranilate + diphosphate = 5-phospho-alpha-D-ribose 1-diphosphate + anthranilate. The protein operates within amino-acid biosynthesis; L-tryptophan biosynthesis; L-tryptophan from chorismate: step 2/5. Catalyzes the transfer of the phosphoribosyl group of 5-phosphorylribose-1-pyrophosphate (PRPP) to anthranilate to yield N-(5'-phosphoribosyl)-anthranilate (PRA). The chain is Anthranilate phosphoribosyltransferase from Desulfosudis oleivorans (strain DSM 6200 / JCM 39069 / Hxd3) (Desulfococcus oleovorans).